Consider the following 402-residue polypeptide: Exodeoxyribonuclease 7 large subunit (402 aa).

The protein belongs to the XseA family. In terms of assembly, heterooligomer composed of large and small subunits.

It localises to the cytoplasm. The catalysed reaction is Exonucleolytic cleavage in either 5'- to 3'- or 3'- to 5'-direction to yield nucleoside 5'-phosphates.. Bidirectionally degrades single-stranded DNA into large acid-insoluble oligonucleotides, which are then degraded further into small acid-soluble oligonucleotides. The chain is Exodeoxyribonuclease 7 large subunit from Streptomyces coelicolor (strain ATCC BAA-471 / A3(2) / M145).